We begin with the raw amino-acid sequence, 258 residues long: (S)-hydroxynitrile lyase (258 aa).

Residues 5–242 form the AB hydrolase-1 domain; sequence HFVLIHTICH…GGDHKLQLTK (238 aa). The 2-hydroxy-2-methylpropanenitrile site is built by T11 and S80. T11, S80, and C81 together coordinate acetone. S80 serves as the catalytic Proton donor/acceptor. H236 (proton donor/acceptor) is an active-site residue.

It belongs to the AB hydrolase superfamily. Hydroxynitrile lyase family. Homotetramer.

It catalyses the reaction a monosubstituted aliphatic (S)-hydroxynitrile = an aldehyde + hydrogen cyanide. The enzyme catalyses a disubstituted aliphatic (S)-hydroxynitrile = a ketone + hydrogen cyanide. It carries out the reaction an aromatic (S)-hydroxynitrile = an aromatic aldehyde + hydrogen cyanide. The catalysed reaction is 2-hydroxy-2-methylpropanenitrile = acetone + hydrogen cyanide. It catalyses the reaction butan-2-one + hydrogen cyanide = 2-hydroxy-2-methylbutanenitrile. The enzyme catalyses pentan-2-one + hydrogen cyanide = (2S)-2-hydroxy-2-methylpentanenitrile. It carries out the reaction hexan-2-one + hydrogen cyanide = (2S)-2-hydroxy-2-methylhexanenitrile. The catalysed reaction is heptan-2-one + hydrogen cyanide = (2S)-2-hydroxy-2-methylheptanenitrile. It catalyses the reaction 4-methylpentan-2-one + hydrogen cyanide = (2S)-2-hydroxy-2,4-dimethylpentanenitrile. The enzyme catalyses 3,3-dimethylbutan-2-one + hydrogen cyanide = (2S)-2-hydroxy-2-methyl-3,3-dimethylbutanenitrile. It carries out the reaction acetophenone + hydrogen cyanide = (2S)-2-hydroxy-2-phenylpropanenitrile. The catalysed reaction is propanal + hydrogen cyanide = (2S)-2-hydroxybutanenitrile. It catalyses the reaction pentanal + hydrogen cyanide = (2S)-2-hydroxyhexanenitrile. The enzyme catalyses 2-methylpropanal + hydrogen cyanide = (2S)-2-hydroxy-3-methylbutanenitrile. It carries out the reaction 2,2-dimethylpropanal + hydrogen cyanide = (2S)-2-hydroxy-3,3-dimethylbutanenitrile. The catalysed reaction is acrolein + hydrogen cyanide = (2S)-2-hydroxybut-3-enenitrile. It catalyses the reaction (2E)-but-2-enal + hydrogen cyanide = (2S,3E)-2-hydroxypent-3-enenitrile. The enzyme catalyses (E)-hex-2-enal + hydrogen cyanide = (2S,3E)-2-hydroxyhept-3-enenitrile. It carries out the reaction cyclohexanecarbaldehyde + hydrogen cyanide = (2S)-2-cyclohexyl-2-hydroxyacetonitrile. The catalysed reaction is benzaldehyde + hydrogen cyanide = (S)-mandelonitrile. It catalyses the reaction 4-methoxybenzaldehyde + hydrogen cyanide = (2S)-2-hydroxy-2-(4-methoxyphenyl)acetonitrile. The enzyme catalyses piperonal + hydrogen cyanide = (2S)-2-(2H-1,3-benzodioxol-5-yl)-2-hydroxyacetonitrile. It carries out the reaction formylthiophene + hydrogen cyanide = (2R)-2-hydroxy-2-(thiophen-2-yl)acetonitrile. The catalysed reaction is 3-formylthiophene + hydrogen cyanide = (2S)-2-hydroxy-2-(thiophen-3-yl)acetonitrile. It catalyses the reaction furan-3-carbaldehyde + hydrogen cyanide = (2S)-2-(furan-3-yl)-2-hydroxyacetonitrile. Involved in cyanogenesis, the release of HCN from cyanogenic glycosides in injured tissues; the release of toxic HCN is believed to play a central role in the defense mechanism of plants against herbivores and microbial attack. Decomposes a variety of cyanohydrins (alpha-hydroxynitriles) into HCN and the corresponding aldehydes or ketones; two natural substrates are 2-hydroxy-2-methylpropanenitrile (acetone cyanohydrin) and 2-hydroxy-2-methylbutanenitrile (2-butanone cyanohydrin), but in vitro can also act on 2-hydroxy-2-methylpentanenitrile (2-pentanone cyanohydrin) and mandelonitrile. Is also able to catalyze the reverse reaction in vitro, leading to the stereospecific synthesis of aliphatic, aromatic, and heterocyclic cyanohydrins, important intermediates in the production of various agrochemicals or pharmaceuticals. In Manihot esculenta (Cassava), this protein is (S)-hydroxynitrile lyase.